The sequence spans 419 residues: MAAEIICVGTEILLGDIVNSNSQYLAQEFAKLGISHYFQSVVGDNIARIHSLLEIAVQRGTEIIVFTGGLGPTPDDLTTEAIAAYFQTPLIERPEIVADITTKFAQRGRTMTPNNRKQALLPEGAEILPNPTGTAPGLIWQPIEGLTIFTFPGVPGEMKRMWQETAVPYLKAQGYGQIVIHSEMMRFRGIGESSLAAKVNHLFALTNPTVAPYASKGEVKLRVAARAESVAAAKKLMDPVVAEIKAIAGLDYFGSDGASLPLVIGDLLRTRQETLAVAESCTGGGLGALITSVSGSSDYFLGGITAYANAVKINLLGVNSADLQNQGAVSETVAQQMALGAKQALDSDWGIGITGIAGPKSDDSAKPIGLVCIAWADPQNHVFSHTYRYGTDRDRELIRYLSACDALDGLRRYLKSDKS.

Belongs to the CinA family.

This chain is CinA-like protein, found in Picosynechococcus sp. (strain ATCC 27264 / PCC 7002 / PR-6) (Agmenellum quadruplicatum).